The sequence spans 372 residues: NAD(P)H-quinone oxidoreductase subunit 1 (372 aa).

Transmembrane regions (helical) follow at residues 27-47 (IIWLPLPMLLVLVAAVVGVLV), 97-117 (ILFTAGPILVLVPVILSWLIV), 128-148 (VGIGIFLWIALSSIQPIGLLM), 176-196 (LALSVLAIVLMTNSLSTIDIV), 204-224 (ILSWNIWRQPVGFIVFWICAL), 266-286 (ILSALLVSILYLGGWGFPIPV), 308-328 (SIGIVMTVLKAYLLVFIAILL), and 347-367 (FLLPISLANLLITAGLKLAFP).

This sequence belongs to the complex I subunit 1 family. As to quaternary structure, NDH-1 is composed of at least 11 different subunits.

Its subcellular location is the cellular thylakoid membrane. It carries out the reaction a plastoquinone + NADH + (n+1) H(+)(in) = a plastoquinol + NAD(+) + n H(+)(out). The catalysed reaction is a plastoquinone + NADPH + (n+1) H(+)(in) = a plastoquinol + NADP(+) + n H(+)(out). Functionally, NDH-1 shuttles electrons from an unknown electron donor, via FMN and iron-sulfur (Fe-S) centers, to quinones in the respiratory and/or the photosynthetic chain. The immediate electron acceptor for the enzyme in this species is believed to be plastoquinone. Couples the redox reaction to proton translocation, and thus conserves the redox energy in a proton gradient. This Prochlorococcus marinus (strain MIT 9215) protein is NAD(P)H-quinone oxidoreductase subunit 1.